The chain runs to 193 residues: Pyridoxal 5'-phosphate synthase subunit PdxT (193 aa).

An L-glutamine-binding site is contributed by 52-54 (GES). The active-site Nucleophile is cysteine 84. L-glutamine contacts are provided by residues arginine 111 and 139–140 (IR). Active-site charge relay system residues include histidine 176 and glutamate 178.

This sequence belongs to the glutaminase PdxT/SNO family. As to quaternary structure, in the presence of PdxS, forms a dodecamer of heterodimers. Only shows activity in the heterodimer.

It carries out the reaction aldehydo-D-ribose 5-phosphate + D-glyceraldehyde 3-phosphate + L-glutamine = pyridoxal 5'-phosphate + L-glutamate + phosphate + 3 H2O + H(+). The enzyme catalyses L-glutamine + H2O = L-glutamate + NH4(+). The protein operates within cofactor biosynthesis; pyridoxal 5'-phosphate biosynthesis. In terms of biological role, catalyzes the hydrolysis of glutamine to glutamate and ammonia as part of the biosynthesis of pyridoxal 5'-phosphate. The resulting ammonia molecule is channeled to the active site of PdxS. The protein is Pyridoxal 5'-phosphate synthase subunit PdxT of Pasteurella multocida (strain Pm70).